The following is a 221-amino-acid chain: Transcriptional regulator GfcR (221 aa).

Positions 35–59 (ASWLVERSQPTDNSQSSSANNPTEA) are disordered. Residues 42–57 (SQPTDNSQSSSANNPT) show a composition bias toward polar residues.

This sequence belongs to the purine/pyrimidine phosphoribosyltransferase family. GfcR subfamily.

Functionally, DNA-binding transcriptional regulator that functions as a regulator of central sugar catabolic pathways. The chain is Transcriptional regulator GfcR from Haloquadratum walsbyi (strain DSM 16790 / HBSQ001).